The sequence spans 301 residues: 33 kDa chaperonin (301 aa).

2 disulfide bridges follow: C239-C241 and C272-C275.

Belongs to the HSP33 family. Post-translationally, under oxidizing conditions two disulfide bonds are formed involving the reactive cysteines. Under reducing conditions zinc is bound to the reactive cysteines and the protein is inactive.

Its subcellular location is the cytoplasm. In terms of biological role, redox regulated molecular chaperone. Protects both thermally unfolding and oxidatively damaged proteins from irreversible aggregation. Plays an important role in the bacterial defense system toward oxidative stress. The sequence is that of 33 kDa chaperonin from Nostoc sp. (strain PCC 7120 / SAG 25.82 / UTEX 2576).